A 216-amino-acid polypeptide reads, in one-letter code: Probable GTP-binding protein EngB (216 aa).

Residues 24-205 (ATPEIAFVGR…WARLAALAAE (182 aa)) form the EngB-type G domain. Residues 32-39 (GRSNVGKS), 59-63 (GRTRA), 86-89 (DLPG), 153-156 (TKTD), and 184-186 (FSA) each bind GTP. Residues Ser39 and Thr61 each coordinate Mg(2+).

The protein belongs to the TRAFAC class TrmE-Era-EngA-EngB-Septin-like GTPase superfamily. EngB GTPase family. Requires Mg(2+) as cofactor.

Its function is as follows. Necessary for normal cell division and for the maintenance of normal septation. The chain is Probable GTP-binding protein EngB from Anaeromyxobacter dehalogenans (strain 2CP-C).